We begin with the raw amino-acid sequence, 370 residues long: Protein Wnt-1 (370 aa).

The first 19 residues, 1–19 (MRVLALLLAVKAACVLLVS), serve as a signal peptide directing secretion. A glycan (N-linked (GlcNAc...) asparagine) is linked at Asn-28. 5 disulfide bridges follow: Cys-92-Cys-103, Cys-142-Cys-150, Cys-152-Cys-169, Cys-217-Cys-231, and Cys-219-Cys-226. A lipid anchor (O-palmitoleoyl serine; by PORCN) is attached at Ser-223. Positions 261–282 (GSNRASHRADPRHLEPENPAHK) are disordered. Residues 267–280 (HRADPRHLEPENPA) show a composition bias toward basic and acidic residues. Intrachain disulfides connect Cys-299–Cys-330, Cys-315–Cys-325, Cys-329–Cys-369, Cys-345–Cys-360, Cys-347–Cys-357, and Cys-352–Cys-353. Asn-316 is a glycosylation site (N-linked (GlcNAc...) asparagine). N-linked (GlcNAc...) asparagine glycosylation occurs at Asn-359.

The protein belongs to the Wnt family. Palmitoleoylation is required for efficient binding to frizzled receptors. Palmitoleoylation is necessary for proper trafficking to cell surface. Depalmitoleoylated by NOTUM, leading to inhibit Wnt signaling pathway.

It is found in the secreted. The protein resides in the extracellular space. Its subcellular location is the extracellular matrix. Ligand for members of the frizzled family of seven transmembrane receptors. Acts in the canonical Wnt signaling pathway by promoting beta-catenin-dependent transcriptional activation. Involved in neurogenesis. Performs a partially redundant function with wnt10b in the formation of the midbrain-hindbrain boundary (MHB) organizer. In the hindbrain, mediates lateral inhibition of boundary cell specification, probably via up-regulation of proneural and Delta gene expression in non-boundary cells; localized expression of wnt1 in boundary cells is maintained via rfng-mediated modulation of Notch activity. This Danio rerio (Zebrafish) protein is Protein Wnt-1 (wnt1).